A 425-amino-acid polypeptide reads, in one-letter code: MFFVDVLWKLVPLYLFGSETKSLSATESILQIVPEAMAATSSNVLCNASESDLCRDDSAAFLLKFVAIASILLAGAAGVTIPLIGRNRRFLQTDGNLFVTAKAFAAGVILATGFVHMLAGGTEALKNPCLPDFPWSKFPFPGFFAMIAALITLFVDFMGTQYYERKQEREASESVEPFGREQSPGIVVPMIGEGTNDGKVFGEEDSGGIHIVGIHAHAAHHRHSHPPGHDSCEGHSKIDIGHAHAHGHGHGHGHGHVHGGLDAVNGARHIVVSQVLELGIVSHSIIIGLSLGVSQSPCTIRPLIAALSFHQFFEGFALGGCISQAQFRNKSATIMACFFALTTPIGIGIGTAVASSFNSHSVGALVTEGILDSLSAGILVYMALVDLIAADFLSTKMRCNFRLQIVSYVMLFLGAGLMSSLAIWA.

Residues 65-85 (FVAIASILLAGAAGVTIPLIG) form a helical membrane-spanning segment. Over 86 to 97 (RNRRFLQTDGNL) the chain is Cytoplasmic. Residues 98 to 118 (FVTAKAFAAGVILATGFVHML) form a helical membrane-spanning segment. The Lumenal segment spans residues 119-137 (AGGTEALKNPCLPDFPWSK). The chain crosses the membrane as a helical span at residues 138–158 (FPFPGFFAMIAALITLFVDFM). The Cytoplasmic portion of the chain corresponds to 159-269 (GTQYYERKQE…GLDAVNGARH (111 aa)). The helical transmembrane segment at 270–290 (IVVSQVLELGIVSHSIIIGLS) threads the bilayer. The Lumenal portion of the chain corresponds to 291-301 (LGVSQSPCTIR). Residues 302–322 (PLIAALSFHQFFEGFALGGCI) form a helical membrane-spanning segment. Topologically, residues 323-333 (SQAQFRNKSAT) are cytoplasmic. A helical membrane pass occupies residues 334 to 354 (IMACFFALTTPIGIGIGTAVA). The Lumenal portion of the chain corresponds to 355–369 (SSFNSHSVGALVTEG). A helical membrane pass occupies residues 370–390 (ILDSLSAGILVYMALVDLIAA). Residues 391-404 (DFLSTKMRCNFRLQ) lie on the Cytoplasmic side of the membrane. A helical membrane pass occupies residues 405 to 425 (IVSYVMLFLGAGLMSSLAIWA).

The protein belongs to the ZIP transporter (TC 2.A.5) family.

It localises to the plastid. The protein resides in the chloroplast thylakoid membrane. Functionally, may play a role in the transport of iron in the plastids. The chain is Fe(2+) transport protein 3, chloroplastic (IRT3) from Arabidopsis thaliana (Mouse-ear cress).